The chain runs to 30 residues: DDCGGLFSGCDSNADCCEGYVCRLWCKYKL.

3 disulfides stabilise this stretch: cysteine 3–cysteine 17, cysteine 10–cysteine 22, and cysteine 16–cysteine 26.

As to expression, expressed by the venom gland.

The protein resides in the secreted. Its function is as follows. Inhibitor of voltage-gated potassium channels of the Kv4/KCND family. Blocks calcium channels (Cav). In Heteropoda venatoria (Brown huntsman spider), this protein is Kappa-sparatoxin-Hv1d.